The following is a 63-amino-acid chain: MAKVHGSLARAGKVKSQTPKVEKTEKPKKPKGRAYKRLLYTRRFVNVTLVNGKRRMNPGPSVQ.

Residues 1 to 35 (MAKVHGSLARAGKVKSQTPKVEKTEKPKKPKGRAY) form a disordered region. A Phosphoserine modification is found at S16. T48 carries the post-translational modification Phosphothreonine.

The protein belongs to the eukaryotic ribosomal protein eS30 family. In terms of assembly, component of the small ribosomal subunit (SSU). Mature yeast ribosomes consist of a small (40S) and a large (60S) subunit. The 40S small subunit contains 1 molecule of ribosomal RNA (18S rRNA) and 33 different proteins (encoded by 57 genes). The large 60S subunit contains 3 rRNA molecules (25S, 5.8S and 5S rRNA) and 46 different proteins (encoded by 81 genes).

The protein resides in the cytoplasm. In terms of biological role, component of the ribosome, a large ribonucleoprotein complex responsible for the synthesis of proteins in the cell. The small ribosomal subunit (SSU) binds messenger RNAs (mRNAs) and translates the encoded message by selecting cognate aminoacyl-transfer RNA (tRNA) molecules. The large subunit (LSU) contains the ribosomal catalytic site termed the peptidyl transferase center (PTC), which catalyzes the formation of peptide bonds, thereby polymerizing the amino acids delivered by tRNAs into a polypeptide chain. The nascent polypeptides leave the ribosome through a tunnel in the LSU and interact with protein factors that function in enzymatic processing, targeting, and the membrane insertion of nascent chains at the exit of the ribosomal tunnel. This chain is Small ribosomal subunit protein eS30B, found in Saccharomyces cerevisiae (strain ATCC 204508 / S288c) (Baker's yeast).